The chain runs to 147 residues: Endothelial differentiation-related factor 1 homolog (147 aa).

A disordered region spans residues 1 to 69 (MAESDWDTVT…KLDRETEELH (69 aa)). Residues 33–42 (RRGEEVETSK) show a composition bias toward basic and acidic residues. Residues 46-58 (AGQNKQHTITRNT) are compositionally biased toward polar residues. Residues 59-69 (AKLDRETEELH) show a composition bias toward basic and acidic residues. Residues 81–135 (IQQGRQGKGMTQKDLATKINEKPQVIADYECGKAIPNNQVMGKIERVIGLKLRGK) form the HTH cro/C1-type domain. A DNA-binding region (H-T-H motif) is located at residues 92–111 (QKDLATKINEKPQVIADYEC).

It localises to the nucleus. In terms of biological role, probable transcriptional coactivator. In Xenopus laevis (African clawed frog), this protein is Endothelial differentiation-related factor 1 homolog (edf1).